Here is a 1058-residue protein sequence, read N- to C-terminus: Structural maintenance of chromosomes protein 6A (1058 aa).

Residues 23 to 1049 enclose the Zinc-hook domain; that stretch reads ILRIRLENFM…SMVKSHEKIK (1027 aa). An ATP-binding site is contributed by 50–57; sequence GQNGSGKS. A coiled-coil region spans residues 136-449; sequence KISSRKEELR…NDLKKHQTNK (314 aa). A flexible hinge region spans residues 450–633; it reads VTAFGGDKVI…PPRPRRPTRL (184 aa). Positions 634–927 form a coiled coil; that stretch reads CASFDDQIKD…RNKDLLKREL (294 aa).

This sequence belongs to the SMC family. SMC6 subfamily. As to quaternary structure, forms a heterodimer with SMC5. The SMC5-SMC6 complex is composed of the SMC5 and SMC6 heterodimer attached via their hinge domain and from the non-SMC subunit NSE4A or NSE4B. In terms of tissue distribution, expressed in seedlings, rosette leaves and floral buds.

The protein localises to the nucleus. It localises to the chromosome. Its function is as follows. Core component of the SMC5-SMC6 complex that promotes sister chromatid alignment after DNA damage and facilitates double-stranded DNA breaks (DSBs) repair via homologous recombination between sister chromatids. The polypeptide is Structural maintenance of chromosomes protein 6A (SMC6A) (Arabidopsis thaliana (Mouse-ear cress)).